Consider the following 131-residue polypeptide: MNDTVTIRTRKFMTNRLLQRKQMVIDVLHPGKATVPKTEIREKLAKMYKTTPDVIFVFGFRTHFGGGKTTGFGMIYDSLDYAKKNEPKHRLARHGLYEKKKTSRKQRKERKNRMKKVRGTAKANVGAGKKK.

M1 bears the N-acetylmethionine mark. Position 9 is a phosphothreonine (T9). K37 participates in a covalent cross-link: Glycyl lysine isopeptide (Lys-Gly) (interchain with G-Cter in SUMO2). The span at 90–100 (RLARHGLYEKK) shows a compositional bias: basic and acidic residues. Residues 90 to 131 (RLARHGLYEKKKTSRKQRKERKNRMKKVRGTAKANVGAGKKK) are disordered. Residues 101–119 (KTSRKQRKERKNRMKKVRG) show a composition bias toward basic residues.

It belongs to the eukaryotic ribosomal protein eS24 family. Component of the small ribosomal subunit. Part of the small subunit (SSU) processome, composed of more than 70 proteins and the RNA chaperone small nucleolar RNA (snoRNA) U3.

Its subcellular location is the cytoplasm. It localises to the nucleus. It is found in the nucleolus. In terms of biological role, component of the small ribosomal subunit. The ribosome is a large ribonucleoprotein complex responsible for the synthesis of proteins in the cell. Required for processing of pre-rRNA and maturation of 40S ribosomal subunits. Part of the small subunit (SSU) processome, first precursor of the small eukaryotic ribosomal subunit. During the assembly of the SSU processome in the nucleolus, many ribosome biogenesis factors, an RNA chaperone and ribosomal proteins associate with the nascent pre-rRNA and work in concert to generate RNA folding, modifications, rearrangements and cleavage as well as targeted degradation of pre-ribosomal RNA by the RNA exosome. This is Small ribosomal subunit protein eS24 (RPS24) from Pongo abelii (Sumatran orangutan).